Here is a 357-residue protein sequence, read N- to C-terminus: Anthranilate phosphoribosyltransferase (357 aa).

Residues G94, 97–98, T102, 104–107, 122–130, and G134 contribute to the 5-phospho-alpha-D-ribose 1-diphosphate site; these read GD, NLST, and KHGNRAASS. G94 contacts anthranilate. Residue S106 participates in Mg(2+) binding. An anthranilate-binding site is contributed by N125. R180 contacts anthranilate. Mg(2+) is bound by residues D238 and E239.

The protein belongs to the anthranilate phosphoribosyltransferase family. Homodimer. Mg(2+) is required as a cofactor.

The enzyme catalyses N-(5-phospho-beta-D-ribosyl)anthranilate + diphosphate = 5-phospho-alpha-D-ribose 1-diphosphate + anthranilate. It functions in the pathway amino-acid biosynthesis; L-tryptophan biosynthesis; L-tryptophan from chorismate: step 2/5. Functionally, catalyzes the transfer of the phosphoribosyl group of 5-phosphorylribose-1-pyrophosphate (PRPP) to anthranilate to yield N-(5'-phosphoribosyl)-anthranilate (PRA). This is Anthranilate phosphoribosyltransferase from Mycobacterium sp. (strain KMS).